The sequence spans 156 residues: Cell division protein SepF (156 aa).

Positions Pro17–Ser44 are disordered.

The protein belongs to the SepF family. In terms of assembly, homodimer. Interacts with FtsZ.

The protein resides in the cytoplasm. Its function is as follows. Cell division protein that is part of the divisome complex and is recruited early to the Z-ring. Probably stimulates Z-ring formation, perhaps through the cross-linking of FtsZ protofilaments. Its function overlaps with FtsA. The protein is Cell division protein SepF of Limosilactobacillus fermentum (strain NBRC 3956 / LMG 18251) (Lactobacillus fermentum).